Reading from the N-terminus, the 287-residue chain is 4-hydroxybenzoate octaprenyltransferase (287 aa).

A run of 9 helical transmembrane segments spans residues 21 to 41 (VGIFLLLWPTLWAVWIAAKGA), 44 to 64 (FKIAVIFIAGSVVMRAAGCIV), 91 to 111 (VTEAMLLFAVLSLIAFTLVLL), 112 to 132 (LNRLTVELAVIGILLALVYPF), 139 to 159 (LPQLWLGVAFSWSIPMAFAAT), 160 to 180 (VGHVPAVAWLLFFAAVLWPIV), 211 to 231 (LMIGLLQGSVLLTFGLLGWYL), 235 to 255 (YWFYLGLLVALGLMCYQQFLI), and 263 to 283 (CFAAFRNNNWVGFFIFLGILL).

This sequence belongs to the UbiA prenyltransferase family. Mg(2+) is required as a cofactor.

The protein localises to the cell inner membrane. It carries out the reaction all-trans-octaprenyl diphosphate + 4-hydroxybenzoate = 4-hydroxy-3-(all-trans-octaprenyl)benzoate + diphosphate. The protein operates within cofactor biosynthesis; ubiquinone biosynthesis. Catalyzes the prenylation of para-hydroxybenzoate (PHB) with an all-trans polyprenyl group. Mediates the second step in the final reaction sequence of ubiquinone-8 (UQ-8) biosynthesis, which is the condensation of the polyisoprenoid side chain with PHB, generating the first membrane-bound Q intermediate 3-octaprenyl-4-hydroxybenzoate. This is 4-hydroxybenzoate octaprenyltransferase from Coxiella burnetii (strain RSA 331 / Henzerling II).